Reading from the N-terminus, the 627-residue chain is Phosphomethylpyrimidine synthase (627 aa).

The disordered stretch occupies residues 1 to 21 (MSVQSNKNLSESAQVDQQSIQ). Substrate contacts are provided by residues Asn-231, Met-260, Tyr-289, His-325, 345–347 (SRG), 386–389 (DGLR), and Glu-425. Position 429 (His-429) interacts with Zn(2+). Tyr-452 serves as a coordination point for substrate. Residue His-493 participates in Zn(2+) binding. Cys-573, Cys-576, and Cys-581 together coordinate [4Fe-4S] cluster.

It belongs to the ThiC family. In terms of assembly, homodimer. [4Fe-4S] cluster serves as cofactor.

The enzyme catalyses 5-amino-1-(5-phospho-beta-D-ribosyl)imidazole + S-adenosyl-L-methionine = 4-amino-2-methyl-5-(phosphooxymethyl)pyrimidine + CO + 5'-deoxyadenosine + formate + L-methionine + 3 H(+). The protein operates within cofactor biosynthesis; thiamine diphosphate biosynthesis. In terms of biological role, catalyzes the synthesis of the hydroxymethylpyrimidine phosphate (HMP-P) moiety of thiamine from aminoimidazole ribotide (AIR) in a radical S-adenosyl-L-methionine (SAM)-dependent reaction. The polypeptide is Phosphomethylpyrimidine synthase (Stutzerimonas stutzeri (strain A1501) (Pseudomonas stutzeri)).